Reading from the N-terminus, the 320-residue chain is Adenosine receptor A3 (320 aa).

Residues 1-16 (MKANNTTTSALWLQIT) are Extracellular-facing. Asn-4 and Asn-5 each carry an N-linked (GlcNAc...) asparagine glycan. The chain crosses the membrane as a helical span at residues 17-39 (YITMEAAIGLCAVVGNMLVIWVV). Over 40–50 (KLNRTLRTTTF) the chain is Cytoplasmic. The helical transmembrane segment at 51 to 74 (YFIVSLALADIAVGVLVIPLAIAV) threads the bilayer. Topologically, residues 75 to 86 (SLEVQMHFYACL) are extracellular. Cys-85 and Cys-168 are joined by a disulfide. Residues 87-108 (FMSCVLLVFTHASIMSLLAIAV) traverse the membrane as a helical segment. At 109-128 (DRYLRVKLTVRYRTVTTQRR) the chain is on the cytoplasmic side. A helical transmembrane segment spans residues 129–150 (IWLFLGLCWLVSFLVGLTPMFG). Topologically, residues 151 to 179 (WNRKVTLELSQNSSTLSCHFRSVVGLDYM) are extracellular. Residues 180–200 (VFFSFITWILIPLVVMCIIYL) form a helical membrane-spanning segment. Residues 201–233 (DIFYIIRNKLSQNLTGFRETRAFYGREFKTAKS) lie on the Cytoplasmic side of the membrane. Residues 234–257 (LFLVLFLFALCWLPLSIINFVSYF) traverse the membrane as a helical segment. The Extracellular segment spans residues 258 to 263 (NVKIPE). Residues 264-286 (IAMCLGILLSHANSMMNPIVYAC) form a helical membrane-spanning segment. Residues 287–320 (KIKKFKETYFVILRACRLCQTSDSLDSNLEQTTE) lie on the Cytoplasmic side of the membrane. Cys-305 carries the S-palmitoyl cysteine lipid modification. A phosphothreonine mark is found at Thr-307, Thr-318, and Thr-319.

The protein belongs to the G-protein coupled receptor 1 family. Post-translationally, phosphorylation on Thr-318 and Thr-319 may be crucial for rapid desensitization. Phosphorylation on Thr-318 may be necessary for phosphorylation on Thr-319 to occur. In terms of tissue distribution, testis, particularly in spermatocytes and spermatids but not in spermatogonia. Low levels in the brain.

The protein resides in the cell membrane. Receptor for adenosine. The activity of this receptor is mediated by G proteins which inhibits adenylyl cyclase. May play a role during reproduction. In Rattus norvegicus (Rat), this protein is Adenosine receptor A3 (Adora3).